The primary structure comprises 334 residues: Glycerol-3-phosphate dehydrogenase [NAD(P)+] (334 aa).

NADPH contacts are provided by serine 14, tyrosine 15, histidine 35, and lysine 109. Positions 109, 138, and 140 each coordinate sn-glycerol 3-phosphate. Residue alanine 142 coordinates NADPH. The sn-glycerol 3-phosphate site is built by lysine 194, aspartate 247, serine 257, arginine 258, and asparagine 259. The active-site Proton acceptor is lysine 194. Arginine 258 contacts NADPH. NADPH-binding residues include valine 282 and glutamate 284.

This sequence belongs to the NAD-dependent glycerol-3-phosphate dehydrogenase family.

Its subcellular location is the cytoplasm. The enzyme catalyses sn-glycerol 3-phosphate + NAD(+) = dihydroxyacetone phosphate + NADH + H(+). It carries out the reaction sn-glycerol 3-phosphate + NADP(+) = dihydroxyacetone phosphate + NADPH + H(+). Its pathway is membrane lipid metabolism; glycerophospholipid metabolism. In terms of biological role, catalyzes the reduction of the glycolytic intermediate dihydroxyacetone phosphate (DHAP) to sn-glycerol 3-phosphate (G3P), the key precursor for phospholipid synthesis. In Aeromonas hydrophila subsp. hydrophila (strain ATCC 7966 / DSM 30187 / BCRC 13018 / CCUG 14551 / JCM 1027 / KCTC 2358 / NCIMB 9240 / NCTC 8049), this protein is Glycerol-3-phosphate dehydrogenase [NAD(P)+].